Reading from the N-terminus, the 206-residue chain is MAKYLGPKLKLCRRENSDLFLKSGVRTIESKCNIDQAPGQHGSRKLRLSEYAKQLREKQKLRRLYGILEKQFHNYYKKASKLKGNTGQNLLFLLESRLDNIVYRLGFGTTRLEARQLINHKSICVNNKIVSFPSFQVSIDDKISVVKKSKNQLRIKASLEIMKQKEKPSWLSIDYPNMEGVFLRSIERDDLSSDINEHLIIELYSK.

The 61-residue stretch at 96-156 folds into the S4 RNA-binding domain; sequence SRLDNIVYRL…KKSKNQLRIK (61 aa).

The protein belongs to the universal ribosomal protein uS4 family. Part of the 30S ribosomal subunit. Contacts protein S5. The interaction surface between S4 and S5 is involved in control of translational fidelity.

In terms of biological role, one of the primary rRNA binding proteins, it binds directly to 16S rRNA where it nucleates assembly of the body of the 30S subunit. Functionally, with S5 and S12 plays an important role in translational accuracy. This is Small ribosomal subunit protein uS4 from Buchnera aphidicola subsp. Cinara cedri (strain Cc).